We begin with the raw amino-acid sequence, 184 residues long: Holliday junction branch migration complex subunit RuvA (184 aa).

The tract at residues 1 to 64 (MIRAIEGIIT…EDANLLYGFL (64 aa)) is domain I. Positions 65–144 (DTNEQKMFEM…SDESVPGYQN (80 aa)) are domain II. Asparagine 144 is a region of interest (flexible linker). The domain III stretch occupies residues 144–184 (NEALLALEALGFKREKIVKILPDLKSTSTSELVKEALKKLA).

This sequence belongs to the RuvA family. Homotetramer. Forms an RuvA(8)-RuvB(12)-Holliday junction (HJ) complex. HJ DNA is sandwiched between 2 RuvA tetramers; dsDNA enters through RuvA and exits via RuvB. An RuvB hexamer assembles on each DNA strand where it exits the tetramer. Each RuvB hexamer is contacted by two RuvA subunits (via domain III) on 2 adjacent RuvB subunits; this complex drives branch migration. In the full resolvosome a probable DNA-RuvA(4)-RuvB(12)-RuvC(2) complex forms which resolves the HJ.

It is found in the cytoplasm. In terms of biological role, the RuvA-RuvB-RuvC complex processes Holliday junction (HJ) DNA during genetic recombination and DNA repair, while the RuvA-RuvB complex plays an important role in the rescue of blocked DNA replication forks via replication fork reversal (RFR). RuvA specifically binds to HJ cruciform DNA, conferring on it an open structure. The RuvB hexamer acts as an ATP-dependent pump, pulling dsDNA into and through the RuvAB complex. HJ branch migration allows RuvC to scan DNA until it finds its consensus sequence, where it cleaves and resolves the cruciform DNA. In Campylobacter curvus (strain 525.92), this protein is Holliday junction branch migration complex subunit RuvA.